Here is a 392-residue protein sequence, read N- to C-terminus: GTPase Obg (392 aa).

In terms of domain architecture, Obg spans 1-159; that stretch reads MKFVDEATIK…RELRLELLLL (159 aa). Residues 160 to 333 enclose the OBG-type G domain; the sequence is ADVGMLGLPN…VCNELSDFMD (174 aa). GTP contacts are provided by residues 166–173, 191–195, 213–216, 283–286, and 314–316; these read GLPNAGKS, FTTLI, DIPG, NKTD, and AAV. 2 residues coordinate Mg(2+): serine 173 and threonine 193. A disordered region spans residues 364–392; that stretch reads GKNVVTEDGDDDDDWDDEEDDGHVIYARD. Over residues 370 to 384 the composition is skewed to acidic residues; sequence EDGDDDDDWDDEEDD.

Belongs to the TRAFAC class OBG-HflX-like GTPase superfamily. OBG GTPase family. In terms of assembly, monomer. The cofactor is Mg(2+).

It localises to the cytoplasm. Its function is as follows. An essential GTPase which binds GTP, GDP and possibly (p)ppGpp with moderate affinity, with high nucleotide exchange rates and a fairly low GTP hydrolysis rate. Plays a role in control of the cell cycle, stress response, ribosome biogenesis and in those bacteria that undergo differentiation, in morphogenesis control. The polypeptide is GTPase Obg (Aliivibrio salmonicida (strain LFI1238) (Vibrio salmonicida (strain LFI1238))).